Reading from the N-terminus, the 761-residue chain is Cyclin-D-binding Myb-like transcription factor 1 (761 aa).

The segment at 1–237 is interaction with CCND2; that stretch reads MSTVEEDSDT…TPEEIEKLKE (237 aa). The segment at 24–51 is disordered; sequence DTDGNLILHCPQNDPDEVDSEDSTEPPH. Over residues 37–47 the composition is skewed to acidic residues; that stretch reads DPDEVDSEDST. Positions 87–170 are required for transcriptional activation; sequence VTMTATTEVA…IDILMNNIER (84 aa). The tract at residues 87–458 is required for DNA-binding; the sequence is VTMTATTEVA…DNTAISPSPM (372 aa). An interaction with CCND1, CCND2 and CCND3 region spans residues 176 to 761; the sequence is GIKDATEIIF…KDVEDLVNCH (586 aa). Positions 225 to 263 constitute a Myb-like 1 domain; sequence GKYTPEEIEKLKELRIKHGNDWATIGAALGRSASSVKDR. The region spanning 268–333 is the HTH myb-type domain; the sequence is KDTCNTGKWT…KWLNYLNWKQ (66 aa). A DNA-binding region (H-T-H motif) is located at residues 306 to 329; sequence WAAVAERVGTRSEKQCRSKWLNYL. In terms of domain architecture, Myb-like 2 spans 339–388; the sequence is WTKEDEINLILRIAELDVADENDINWDLLAEGWSSVRSPQWLRSKWWTIK. The required for transcriptional activation stretch occupies residues 459–761; sequence AALQIPVQIT…KDVEDLVNCH (303 aa). 2 disordered regions span residues 584 to 625 and 740 to 761; these read SLSQ…MTIQ and GSSLGSPVSEDSKDVEDLVNCH.

The protein belongs to the DMTF1 family. As to quaternary structure, interacts with the D-type cyclins CCND1, CCND2 and CCND3. Interaction with D-type cyclins may modulate transcriptional activation by this protein. Phosphorylated by the cyclin-D2/CDK4, cyclin-D3/CDK4 and cyclin-D2/CDK6 complexes and to a lesser extent by the cyclin-D1/CDK4 complex. As to expression, ubiquitously expressed (at mRNA level). Expressed in brain, intestine, kidney, lung, pancreas, skin, spleen and tongue (at protein level). Expressed at high levels in testis and thymus (at protein level). In all tissues examined, expression is predominant in non-proliferating and differentiated cell types. These include epithelial, interstitial and smooth muscle cells of the intestine, differentiated spermatids, sperm and interstitial cells of the testis, and lymphoid cells of the medullary compartment of the thymus.

The protein localises to the nucleus. Functionally, transcriptional activator which activates the CDKN2A/ARF locus in response to Ras-Raf signaling, thereby promoting p53/TP53-dependent growth arrest. May also cooperate with MYB to activate transcription of the ANPEP gene. Binds to the consensus sequence 5'-CCCG[GT]ATGT-3'. This chain is Cyclin-D-binding Myb-like transcription factor 1 (Dmtf1), found in Mus musculus (Mouse).